The chain runs to 130 residues: Small ribosomal subunit protein uS8 (130 aa).

The protein belongs to the universal ribosomal protein uS8 family. Part of the 30S ribosomal subunit. Contacts proteins S5 and S12.

Its function is as follows. One of the primary rRNA binding proteins, it binds directly to 16S rRNA central domain where it helps coordinate assembly of the platform of the 30S subunit. This is Small ribosomal subunit protein uS8 from Ectopseudomonas mendocina (strain ymp) (Pseudomonas mendocina).